The following is a 556-amino-acid chain: Zinc finger protein GLI1 (556 aa).

3 disordered regions span residues 57–83, 133–178, and 200–222; these read TEHP…KKRA, SLGY…TPAR, and KYPE…QDPL. The segment covering 135–148 has biased composition (low complexity); that stretch reads GYQNPPGQQKGQGQ. C2H2-type zinc fingers lie at residues 247–272, 280–307, 313–337, 343–368, and 374–399; these read TNCY…NNEH, FVCH…MRRH, HKCT…LRSH, YVCE…NRTH, and YICK…KTVH. Residues 295–303 form an interaction with DNA region; that stretch reads KAQYMLVVH. Interaction with DNA regions lie at residues 357–362 and 387–393; these read ASDRAK and DPSSLRK. Residues 387–492 are disordered; it reads DPSSLRKHVK…VEMTGNTGGS (106 aa). Positions 454–472 are enriched in low complexity; it reads SKPQPSPGGQSSCSSDRSP.

The protein belongs to the GLI C2H2-type zinc-finger protein family.

The protein localises to the cytoplasm. Its subcellular location is the nucleus. Functionally, acts as a transcriptional activator. Binds to the DNA consensus sequence 5'-GACCACCCA-3'. May regulate the transcription of specific genes during normal development. May play a role in craniofacial development and digital development, as well as development of the central nervous system and gastrointestinal tract. Mediates SHH signaling. Plays a role in cell proliferation and differentiation via its role in SHH signaling. The sequence is that of Zinc finger protein GLI1 (GLI1) from Gallus gallus (Chicken).